The primary structure comprises 332 residues: Glycerol-3-phosphate dehydrogenase [NAD(P)+] (332 aa).

Residues Trp11, Arg30, and Lys108 each coordinate NADPH. The sn-glycerol 3-phosphate site is built by Lys108, Gly137, and Ser139. Residue Ala141 participates in NADPH binding. Residues Lys192, Asp245, Ser255, Arg256, and Asn257 each contribute to the sn-glycerol 3-phosphate site. The active-site Proton acceptor is the Lys192. Residue Arg256 coordinates NADPH. Positions 280 and 282 each coordinate NADPH.

The protein belongs to the NAD-dependent glycerol-3-phosphate dehydrogenase family.

Its subcellular location is the cytoplasm. The enzyme catalyses sn-glycerol 3-phosphate + NAD(+) = dihydroxyacetone phosphate + NADH + H(+). It carries out the reaction sn-glycerol 3-phosphate + NADP(+) = dihydroxyacetone phosphate + NADPH + H(+). It functions in the pathway membrane lipid metabolism; glycerophospholipid metabolism. In terms of biological role, catalyzes the reduction of the glycolytic intermediate dihydroxyacetone phosphate (DHAP) to sn-glycerol 3-phosphate (G3P), the key precursor for phospholipid synthesis. The chain is Glycerol-3-phosphate dehydrogenase [NAD(P)+] from Burkholderia orbicola (strain MC0-3).